A 1010-amino-acid chain; its full sequence is Signal peptide, CUB and EGF-like domain-containing protein 2 (1010 aa).

An N-terminal signal peptide occupies residues Met-1 to Ala-24. The EGF-like 1; calcium-binding domain occupies Asn-28–Glu-68. Intrachain disulfides connect Cys-32-Cys-45, Cys-39-Cys-54, Cys-56-Cys-67, Cys-73-Cys-85, Cys-81-Cys-94, Cys-96-Cys-109, Cys-115-Cys-126, and Cys-122-Cys-135. Residues Asp-69–Leu-110 enclose the EGF-like 2; calcium-binding domain. The 37-residue stretch at Asp-111–Gln-147 folds into the EGF-like 3; calcium-binding domain. EGF-like domains lie at Cys-160–Cys-196 and Cys-200–Cys-235. Residue Asn-249 is glycosylated (N-linked (GlcNAc...) asparagine). The 36-residue stretch at Cys-269 to Cys-304 folds into the EGF-like 6 domain. In terms of domain architecture, EGF-like 7; calcium-binding spans Asp-306–Gln-346. 9 disulfides stabilise this stretch: Cys-310-Cys-321, Cys-317-Cys-330, Cys-332-Cys-345, Cys-351-Cys-361, Cys-357-Cys-370, Cys-372-Cys-384, Cys-390-Cys-401, Cys-397-Cys-410, and Cys-412-Cys-425. The region spanning Asp-347–Gly-385 is the EGF-like 8; calcium-binding domain. The EGF-like 9; calcium-binding domain maps to Asp-386 to Ile-426. Residues Asn-488, Asn-703, Asn-774, and Asn-803 are each glycosylated (N-linked (GlcNAc...) asparagine). Residues Cys-822 and Cys-848 are joined by a disulfide bond. Positions Cys-822–Tyr-934 constitute a CUB domain. Positions Ile-860–Leu-869 are interaction with the cholesterol-anchor of SHH. The cysteines at positions 875 and 896 are disulfide-linked. Asn-982 carries an N-linked (GlcNAc...) asparagine glycan.

Interacts with SHH via the cholesterol anchor of the dually lipid-modified SHH (ShhNp). Interacts with PTCH1. Forms homooligomers and heterooligomers with SCUBE1 and SCUBE3. Interacts with VEGFR2. In terms of processing, N-glycosylated.

It localises to the secreted. It is found in the cell surface. In terms of biological role, lipid-binding protein required for SHH long-range signaling by binding to the dually lipid-modified SHH (ShhNp) and by promoting ShhNp mobilization, solubilization and release from the cell membrane. Acts by enhancing the proteolytic processing (shedding) of the lipid-modified N- and C- terminal of ShhNp at the cell surface. Synergizes with DISP1 to cause an increase in SHH secretion. Probable cell surface coreceptor for VEGFR2 involved in VEGFR2-mediated angiogenesis. This chain is Signal peptide, CUB and EGF-like domain-containing protein 2 (scube2), found in Danio rerio (Zebrafish).